The sequence spans 328 residues: Sulfate adenylyltransferase subunit 2 (328 aa).

Residues 305–328 (ERQGRVIDRDSTGSMERKKAEGYF) are disordered.

Belongs to the PAPS reductase family. CysD subfamily. As to quaternary structure, heterodimer composed of CysD, the smaller subunit, and CysN.

The catalysed reaction is sulfate + ATP + H(+) = adenosine 5'-phosphosulfate + diphosphate. It participates in sulfur metabolism; hydrogen sulfide biosynthesis; sulfite from sulfate: step 1/3. With CysN forms the ATP sulfurylase (ATPS) that catalyzes the adenylation of sulfate producing adenosine 5'-phosphosulfate (APS) and diphosphate, the first enzymatic step in sulfur assimilation pathway. APS synthesis involves the formation of a high-energy phosphoric-sulfuric acid anhydride bond driven by GTP hydrolysis by CysN coupled to ATP hydrolysis by CysD. The polypeptide is Sulfate adenylyltransferase subunit 2 (Rhodopseudomonas palustris (strain BisB18)).